A 203-amino-acid polypeptide reads, in one-letter code: Eukaryotic translation initiation factor isoform 4E (203 aa).

Over residues 1–25 (MATETAGAVVESSSAATVPSPAPEA) the composition is skewed to low complexity. Residues 1–27 (MATETAGAVVESSSAATVPSPAPEAGS) are disordered. MRNA is bound by residues 47 to 52 (QGAAWG), Lys-79, and 97 to 98 (WE). Cys-102 and Cys-141 are joined by a disulfide. Residue 148-153 (RQRQDK) participates in mRNA binding.

This sequence belongs to the eukaryotic initiation factor 4E family. As to quaternary structure, EIF4F is a multi-subunit complex, the composition of which varies with external and internal environmental conditions. It is composed of at least EIF4A, EIF4E and EIF4G. EIF4E is also known to interact with other partners. In higher plants two isoforms of EIF4F have been identified, named isoform EIF4F and isoform EIF(iso)4F. Isoform EIF4F has subunits p220 and p26, whereas isoform EIF(iso)4F has subunits p82 and p28. In terms of assembly, (Microbial infection) Interacts with the potyvirus peanut stripe virus (PStV) helper component proteinase (HC-Pro) in the cytoplasm and with PStV viral genome-linked protein (VPg) in the nucleus; these interactions are possible in susceptible hosts but impaired in resistant plants. Post-translationally, according to the redox status, the Cys-102-Cys-141 disulfide bridge may have a role in regulating protein function by affecting its ability to bind capped mRNA. In terms of tissue distribution, expressed ubiquitously with highest levels in young leaves and roots, and lowest levels in flowers.

Its subcellular location is the cytoplasm. It localises to the nucleus. In terms of biological role, component of the protein complex eIF4F, which is involved in the recognition of the mRNA cap, ATP-dependent unwinding of 5'-terminal secondary structure and recruitment of mRNA to the ribosome. Recognizes and binds the 7-methylguanosine-containing mRNA cap during an early step in the initiation of protein synthesis and facilitates ribosome binding by inducing the unwinding of the mRNAs secondary structures. Key component of recessive resistance to potyviruses such as peanut stripe virus (PStV). Functionally, (Microbial infection) Susceptibility host factor required for viral infection by recruiting viral RNAs to the host ribosomal complex via an interaction with viral genome-linked protein (VPg). The sequence is that of Eukaryotic translation initiation factor isoform 4E from Arachis hypogaea (Peanut).